The chain runs to 661 residues: MTEEAMRAMALSIRSLTIDAIERANSGHPGLPLGAAELAACLYGTILKHNPANPSWFNRDRFVLSAGHGSMLLYAALHLSGYDVSLEDIKNFRQVGSRCPGHPEYGCTPGVEATTGPLGQGISMAVGFALAEAMLAARFNTDEHAVVDHHTYALVGEGCLMEGVASEASSFAGTMRLGKLIVFYDENHISIDGSTDLTFSEDVAKRYEAYGWQVLRGSMYSYTDIMDLTACAKRDDRPSLIILRSIIGKGAPTVEGSARAHGAPLGEAGVREAKKALGLDPACSFFVAPELTAVLQKRKCECAHVEDSWNELFEAWSTQYPEKRADWDAAFVPGGVSTSQLARVVCPHFEKGSSLATRTASGKVLDALCSVLPNLVGGSADLRGPNAVAVSSLRPFSAEHRAGGYCYFGVREFAMAAIVNGMQLHGGLRAFGATFMVFSDYFRPALRLAALMRIPSVFVLTHDSIFVGEDGPTHQPVETLAALRAIPNVLVLRPADAEETFEAWKIALLHRSGPVCIVLSRQNVPVFEKSDSSWRSTVEESGAYVVREGGATPELTVLASGSEVDLALRAAQLSKRRVRVVSVLCKERFEAAGDEVQRRIQGGARVVVAEAGVYQGWGAWAKREKCLVLDRFGXSGPGTQVAQALEFTAEALVEIILDWLA.

A substrate-binding site is contributed by His-28. Thiamine diphosphate contacts are provided by residues His-68 and 116 to 118 (GPL). Glu-157 serves as a coordination point for Mg(2+). Positions 158 and 187 each coordinate thiamine diphosphate. Mg(2+) contacts are provided by Asn-187 and Ile-189. Residues His-261 and Arg-358 each coordinate substrate. Position 261 (His-261) interacts with thiamine diphosphate. The active-site Proton donor is Glu-412. Phe-438 contacts thiamine diphosphate. Residues His-462, Asp-470, and Arg-521 each coordinate substrate.

Belongs to the transketolase family. Homodimer. It depends on Mg(2+) as a cofactor. Requires Ca(2+) as cofactor. The cofactor is Mn(2+). Co(2+) serves as cofactor. Thiamine diphosphate is required as a cofactor.

It catalyses the reaction D-sedoheptulose 7-phosphate + D-glyceraldehyde 3-phosphate = aldehydo-D-ribose 5-phosphate + D-xylulose 5-phosphate. In terms of biological role, catalyzes the transfer of a two-carbon ketol group from a ketose donor to an aldose acceptor, via a covalent intermediate with the cofactor thiamine pyrophosphate. This chain is Transketolase (tkt), found in Treponema pallidum (strain Nichols).